A 466-amino-acid chain; its full sequence is Pentatricopeptide repeat-containing protein At4g01400, mitochondrial (466 aa).

Residues 1 to 34 (MIRRPIYDFAAVFRHLTSPLSTSSRFLFYSSSEH) constitute a mitochondrion transit peptide. 8 PPR repeats span residues 118-152 (TGEI…NFTP), 153-188 (QPKH…GVMP), 189-223 (NTRS…DVVP), 224-258 (DVDS…GFVP), 259-293 (DRLS…GCNP), 294-328 (DLVH…GCSP), 329-363 (NSVS…GFSP), and 364-398 (HFSV…GETL).

Belongs to the PPR family. P subfamily.

The protein resides in the mitochondrion. The protein is Pentatricopeptide repeat-containing protein At4g01400, mitochondrial of Arabidopsis thaliana (Mouse-ear cress).